We begin with the raw amino-acid sequence, 399 residues long: Leu/Ile/Val-binding protein homolog 7 (399 aa).

The first 22 residues, 1–22, serve as a signal peptide directing secretion; that stretch reads MEKHLIALSVAALLAGAAPASA.

Belongs to the leucine-binding protein family.

In terms of biological role, component of an amino-acid transport system. In Brucella melitensis biotype 1 (strain ATCC 23456 / CCUG 17765 / NCTC 10094 / 16M), this protein is Leu/Ile/Val-binding protein homolog 7.